The primary structure comprises 381 residues: Homoserine O-succinyltransferase (381 aa).

Residues 45–360 (NAVLVCHALN…PHGHDAFLLD (316 aa)) form the AB hydrolase-1 domain. The Nucleophile role is filled by Ser151. Residue Arg221 participates in substrate binding. Residues Asp321 and His354 contribute to the active site. Asp355 contributes to the substrate binding site.

The protein belongs to the AB hydrolase superfamily. MetX family. Homodimer.

It localises to the cytoplasm. The enzyme catalyses L-homoserine + succinyl-CoA = O-succinyl-L-homoserine + CoA. It functions in the pathway amino-acid biosynthesis; L-methionine biosynthesis via de novo pathway; O-succinyl-L-homoserine from L-homoserine: step 1/1. Transfers a succinyl group from succinyl-CoA to L-homoserine, forming succinyl-L-homoserine. The sequence is that of Homoserine O-succinyltransferase from Burkholderia ambifaria (strain MC40-6).